A 372-amino-acid chain; its full sequence is MSNQHTLLTSNLLPVGSNISTWWNFGSMLLTCLIMQILTGFFLAIHYTANINLAFSSVIHITRDVPYGWIMQNLHAIGASMFFICIYIHIARGLYYGLYLNKEVWLSGTTLLITLMATAFFGYVLPWGQMSFWAATVITNLLTAIPHLGTVLTTWLWGGFSINDPTLTRFFALHFILPFAIISLSSIHIILLHNEGSNNPLGTNSDIDKIPFHPYHSYKDMLMITIMVTLLFIILSFLPNLLNDPENFSKANPLITPQHIKPEWYFLFAYGILRSIPNKLGGTMALTMSIMILMTTPFTHTSHTRSMIFRPLSQTMFWTLIVTFIMITWTATKPVEPPFITISQTTTVFYFSFFIMTPLLGWTENKIMMMKN.

4 helical membrane passes run Phe25–Ile45, Trp69–Ile90, Trp105–Leu125, and Phe170–Ile190. 2 residues coordinate heme b: His75 and His89. Heme b is bound by residues His174 and His188. His193 is a binding site for a ubiquinone. 4 consecutive transmembrane segments (helical) span residues Tyr218–Leu238, Leu280–His300, Leu312–Thr332, and Phe339–Pro358.

Belongs to the cytochrome b family. As to quaternary structure, the cytochrome bc1 complex contains 3 respiratory subunits (MT-CYB, CYC1 and UQCRFS1), 2 core proteins (UQCRC1 and UQCRC2) and probably 6 low-molecular weight proteins. Requires heme b as cofactor.

Its subcellular location is the mitochondrion inner membrane. In terms of biological role, component of the ubiquinol-cytochrome c reductase complex (complex III or cytochrome b-c1 complex) that is part of the mitochondrial respiratory chain. The b-c1 complex mediates electron transfer from ubiquinol to cytochrome c. Contributes to the generation of a proton gradient across the mitochondrial membrane that is then used for ATP synthesis. The chain is Cytochrome b (MT-CYB) from Aspidelaps scutatus (Shield-nose snake).